Here is a 154-residue protein sequence, read N- to C-terminus: Putative esterase AF_2264 (154 aa).

The protein belongs to the thioesterase PaaI family.

The chain is Putative esterase AF_2264 from Archaeoglobus fulgidus (strain ATCC 49558 / DSM 4304 / JCM 9628 / NBRC 100126 / VC-16).